We begin with the raw amino-acid sequence, 280 residues long: Lysosome-associated membrane glycoprotein 5 (280 aa).

Residues M1–A29 form the signal peptide. The Extracellular portion of the chain corresponds to E30–E235. N-linked (GlcNAc...) asparagine glycosylation is found at N35, N53, N102, and N127. The chain crosses the membrane as a helical span at residues T236 to Y256. The Cytoplasmic portion of the chain corresponds to H257–G280.

The protein belongs to the LAMP family. Post-translationally, glycosylated. In terms of tissue distribution, in brain, strongly expressed in the globus pallidus/ventral pallidum complex, the substantia nigra pars reticulata and the entopeduncular nucleus (at protein level). Expressed in the external plexiform layer of the olfactory bulb (at protein level). May be weakly expressed in neocortex and striatum (at protein level). Highly expressed in brain; not detected in other tissues tested. Detected in the cingulate cortex, cortical plate and caudate putamen. In neocortex, specifically expressed in neurons of layers II/III and V.

The protein localises to the cytoplasmic vesicle membrane. Its subcellular location is the cell membrane. The protein resides in the cell projection. It localises to the dendrite. It is found in the cytoplasmic vesicle. The protein localises to the secretory vesicle. Its subcellular location is the synaptic vesicle membrane. The protein resides in the growth cone membrane. It localises to the early endosome membrane. It is found in the recycling endosome. The protein localises to the endoplasmic reticulum-Golgi intermediate compartment membrane. Its subcellular location is the endosome membrane. Its function is as follows. Plays a role in short-term synaptic plasticity in a subset of GABAergic neurons in the brain. The polypeptide is Lysosome-associated membrane glycoprotein 5 (Lamp5) (Mus musculus (Mouse)).